The primary structure comprises 1668 residues: Probable histone acetyltransferase HAC-like 1 (1668 aa).

Disordered stretches follow at residues 1–34, 459–493, and 528–551; these read MNVG…ADGL, QQQP…SEQG, and KGGQ…HDSQ. Residues 11–23 are compositionally biased toward polar residues; that stretch reads GQMSGQAPQTNQV. Residues 459 to 469 show a composition bias toward low complexity; that stretch reads QQQPNSQHQQS. Polar residues-rich tracts occupy residues 470–491 and 536–551; these read ILRS…QLSE and LSSS…HDSQ. The TAZ-type 1 zinc-finger motif lies at 651–732; sequence AAGNIYYFRQ…DLQCPVCSNA (82 aa). Over residues 886–899 the composition is skewed to basic and acidic residues; the sequence is KETSETAPEVKNEA. The disordered stretch occupies residues 886–912; it reads KETSETAPEVKNEANDSTDITVSKSGK. Residues 900–909 are compositionally biased toward polar residues; sequence NDSTDITVSK. A PHD-type zinc finger spans residues 1002 to 1079; sequence HFFCIPCYNE…EYTCPNCYVE (78 aa). In terms of domain architecture, CBP/p300-type HAT spans 1094–1530; the sequence is VLGAKDLPRT…VLYHLHNPTA (437 aa). Residues 1217 to 1219, 1236 to 1237, and Trp-1292 contribute to the acetyl-CoA site; these read LDS and RT. Residues 1342–1365 adopt a coiled-coil conformation; sequence GAAEDMINQLRQEEDDRKQQKKGK. A ZZ-type zinc finger spans residues 1412-1475; that stretch reads HLQYSCSHCC…TLHPVDIVGL (64 aa). Zn(2+)-binding residues include Cys-1417, Cys-1420, Cys-1432, Cys-1435, Cys-1441, Cys-1444, His-1457, and His-1465. Residues 1553–1634 form a TAZ-type 2 zinc finger; the sequence is EVCPDFDLRK…GCNVPRCRDL (82 aa). Residues 1630–1650 adopt a coiled-coil conformation; sequence RCRDLKEHLRRLQQQSDSRRR.

The protein localises to the nucleus. The catalysed reaction is L-lysyl-[protein] + acetyl-CoA = N(6)-acetyl-L-lysyl-[protein] + CoA + H(+). Its function is as follows. Acetyltransferase enzyme. Acetylates histones, giving a specific tag for transcriptional activation. The chain is Probable histone acetyltransferase HAC-like 1 from Oryza sativa subsp. japonica (Rice).